The following is a 447-amino-acid chain: Trigger factor (447 aa).

The region spanning 174–261 is the PPIase FKBP-type domain; sequence GDIAVLGFKG…LKDLKTRELP (88 aa).

It belongs to the FKBP-type PPIase family. Tig subfamily.

The protein localises to the cytoplasm. It carries out the reaction [protein]-peptidylproline (omega=180) = [protein]-peptidylproline (omega=0). Its function is as follows. Involved in protein export. Acts as a chaperone by maintaining the newly synthesized protein in an open conformation. Functions as a peptidyl-prolyl cis-trans isomerase. The polypeptide is Trigger factor (Synechococcus sp. (strain CC9902)).